The chain runs to 324 residues: 2-oxoisovalerate dehydrogenase subunit beta (324 aa).

Thiamine diphosphate is bound by residues Glu-29, 58-60 (LSE), Gln-82, and 86-89 (YIFP). Substrate is bound by residues 83–86 (FADY) and His-129. The Proton acceptor role is filled by His-129.

As to quaternary structure, heterotetramer of two alpha and two beta chains. Directly associated with ODBA in the E1 complex. Thiamine diphosphate is required as a cofactor.

The catalysed reaction is N(6)-[(R)-lipoyl]-L-lysyl-[protein] + 3-methyl-2-oxobutanoate + H(+) = N(6)-[(R)-S(8)-2-methylpropanoyldihydrolipoyl]-L-lysyl-[protein] + CO2. In terms of biological role, the branched-chain alpha-keto dehydrogenase complex catalyzes the overall conversion of alpha-keto acids to acyl-CoA and CO(2). It contains multiple copies of three enzymatic components: branched-chain alpha-keto acid decarboxylase (E1), lipoamide acyltransferase (E2) and lipoamide dehydrogenase (E3). This Thermus thermophilus (strain ATCC BAA-163 / DSM 7039 / HB27) protein is 2-oxoisovalerate dehydrogenase subunit beta.